The primary structure comprises 159 residues: ATP synthase subunit b 1 (159 aa).

A helical transmembrane segment spans residues 5-25 (FWAFIGLILFLALLFYFKVPA).

This sequence belongs to the ATPase B chain family. In terms of assembly, F-type ATPases have 2 components, F(1) - the catalytic core - and F(0) - the membrane proton channel. F(1) has five subunits: alpha(3), beta(3), gamma(1), delta(1), epsilon(1). F(0) has three main subunits: a(1), b(2) and c(10-14). The alpha and beta chains form an alternating ring which encloses part of the gamma chain. F(1) is attached to F(0) by a central stalk formed by the gamma and epsilon chains, while a peripheral stalk is formed by the delta and b chains.

The protein localises to the cell inner membrane. Functionally, f(1)F(0) ATP synthase produces ATP from ADP in the presence of a proton or sodium gradient. F-type ATPases consist of two structural domains, F(1) containing the extramembraneous catalytic core and F(0) containing the membrane proton channel, linked together by a central stalk and a peripheral stalk. During catalysis, ATP synthesis in the catalytic domain of F(1) is coupled via a rotary mechanism of the central stalk subunits to proton translocation. Component of the F(0) channel, it forms part of the peripheral stalk, linking F(1) to F(0). In Bartonella bacilliformis (strain ATCC 35685 / KC583 / Herrer 020/F12,63), this protein is ATP synthase subunit b 1.